Consider the following 124-residue polypeptide: Secreted RxLR effector protein 49 (124 aa).

Positions 1–22 are cleaved as a signal peptide; that stretch reads MIRRSPLVAVILFVAITHVVLA. The RxLR motif lies at 57 to 60; it reads RSLR.

This sequence belongs to the RxLR effector family.

It localises to the secreted. Its subcellular location is the host cytoplasm. The protein localises to the host nucleus. Effector that acts as a broad suppressor of cell death to interrupt plant immunity. Inhibits cell death induced by cell death-inducing proteins, including the PAMP elicitor INF1 from P.infestans. This is Secreted RxLR effector protein 49 from Plasmopara viticola (Downy mildew of grapevine).